The primary structure comprises 423 residues: Dihydroorotase (423 aa).

The Zn(2+) site is built by H60 and H62. Substrate contacts are provided by residues 62-64 (HFR) and N94. Residues D151, H178, and H231 each contribute to the Zn(2+) site. N277 is a substrate binding site. D304 serves as a coordination point for Zn(2+). D304 is a catalytic residue. Residue H308 participates in substrate binding.

It belongs to the metallo-dependent hydrolases superfamily. DHOase family. Class I DHOase subfamily. Zn(2+) serves as cofactor.

It carries out the reaction (S)-dihydroorotate + H2O = N-carbamoyl-L-aspartate + H(+). The protein operates within pyrimidine metabolism; UMP biosynthesis via de novo pathway; (S)-dihydroorotate from bicarbonate: step 3/3. In terms of biological role, catalyzes the reversible cyclization of carbamoyl aspartate to dihydroorotate. The sequence is that of Dihydroorotase from Lactococcus lactis subsp. lactis (strain IL1403) (Streptococcus lactis).